The primary structure comprises 173 residues: NADH-ubiquinone oxidoreductase chain 6 (173 aa).

5 consecutive transmembrane segments (helical) span residues methionine 1–serine 21, tyrosine 27–glycine 47, valine 48–valine 68, valine 87–phenylalanine 107, and cysteine 139–leucine 159.

Belongs to the complex I subunit 6 family.

Its subcellular location is the mitochondrion membrane. It carries out the reaction a ubiquinone + NADH + 5 H(+)(in) = a ubiquinol + NAD(+) + 4 H(+)(out). Functionally, core subunit of the mitochondrial membrane respiratory chain NADH dehydrogenase (Complex I) that is believed to belong to the minimal assembly required for catalysis. Complex I functions in the transfer of electrons from NADH to the respiratory chain. The immediate electron acceptor for the enzyme is believed to be ubiquinone. This Aethia pusilla (Least auklet) protein is NADH-ubiquinone oxidoreductase chain 6 (MT-ND6).